Here is an 840-residue protein sequence, read N- to C-terminus: Anaphase-promoting complex subunit CDC16 (840 aa).

Disordered regions lie at residues 67 to 97 and 173 to 212; these read AART…TSPY and GVVR…TTTT. TPR repeat units follow at residues 229-260, 263-288, and 296-319; these read AIER…YNIS, PDDA…LITR, and ILCR…LDVI. Residues 329–350 are disordered; sequence PSTTAANTMSNNGNNSNTSQPV. The span at 330-347 shows a compositional bias: low complexity; the sequence is STTAANTMSNNGNNSNTS. TPR repeat units follow at residues 357-388, 393-416, 426-454, 464-492, 499-526, 531-560, 565-593, 600-628, 633-665, 671-703, and 708-737; these read MESS…AILV, FEAF…LFDS, KEIM…EILA, DVVR…VLEN, ILPA…LAET, AITW…SSIL, AAAW…TASR, LPKL…AYDI, PLVL…VVKD, RTTI…VLEK, and SEIH…SLYL. Residues 802 to 840 are disordered; it reads RTQKEIFDQNNKALRKGGHDSKTGSNNADDDFDADMELE. Residues 829-840 are compositionally biased toward acidic residues; sequence ADDDFDADMELE.

This sequence belongs to the APC6/CDC16 family. The APC/C is composed of at least 13 subunits that stay tightly associated throughout the cell cycle: APC1, APC2, APC4, APC5, APC9, APC11, CDC16, CDC23, CDC26, CDC27, DOC1, MND2 and SWM1. Interacts with AMA1. Phosphorylated by CDC28, which is required for the early mitotic activity of the APC/C in its CDC20-bound form.

It localises to the nucleus. Its pathway is protein modification; protein ubiquitination. Component of the anaphase promoting complex/cyclosome (APC/C), a cell cycle-regulated E3 ubiquitin-protein ligase complex that controls progression through mitosis and the G1 phase of the cell cycle. The APC/C is thought to confer substrate specificity and, in the presence of ubiquitin-conjugating E2 enzymes, it catalyzes the formation of protein-ubiquitin conjugates that are subsequently degraded by the 26S proteasome. In early mitosis, the APC/C is activated by CDC20 and targets securin PDS1, the B-type cyclin CLB5, and other anaphase inhibitory proteins for proteolysis, thereby triggering the separation of sister chromatids at the metaphase-to-anaphase transition. In late mitosis and in G1, degradation of CLB5 allows activation of the APC/C by CDH1, which is needed to destroy CDC20 and the B-type cyclin CLB2 to allow exit from mitosis and creating the low CDK state necessary for cytokinesis and for reforming prereplicative complexes in G1 prior to another round of replication. The protein is Anaphase-promoting complex subunit CDC16 (CDC16) of Saccharomyces cerevisiae (strain ATCC 204508 / S288c) (Baker's yeast).